The primary structure comprises 160 residues: Prostaglandin E synthase 3 (160 aa).

Residues 1 to 90 form the CS domain; that stretch reads MQPASAKWYD…ESGQSWPRLT (90 aa). K33 bears the N6-acetyllysine mark. K35 is covalently cross-linked (Glycyl lysine isopeptide (Lys-Gly) (interchain with G-Cter in SUMO2)). At S44 the chain carries Phosphoserine. A Glycyl lysine isopeptide (Lys-Gly) (interchain with G-Cter in SUMO2) cross-link involves residue K65. A phosphoserine mark is found at S85, S100, S113, and S118. The disordered stretch occupies residues 118–160; that stretch reads SNFDRFSEMMDHMGGDEDVDLPEVDGADDDSQDSDDEKMPDLE. Residues 122–132 show a composition bias toward basic and acidic residues; sequence RFSEMMDHMGG. The segment covering 133-153 has biased composition (acidic residues); it reads DEDVDLPEVDGADDDSQDSDD. A phosphoserine mark is found at S148 and S151. A PXLE motif motif is present at residues 157–160; sequence PDLE.

It belongs to the p23/wos2 family. As to quaternary structure, probably forms a complex composed of chaperones HSP90 and HSP70, co-chaperones STIP1/HOP, CDC37, PPP5C, PTGES3/p23, TSC1 and client protein TSC2. Binds to the progesterone receptor. Interacts with TERT; the interaction, together with HSP90AA1, is required for correct assembly and stabilization of the telomerase holoenzyme complex. Interacts (via PXLE motif) with EGLN1/PHD2, recruiting EGLN1/PHD2 to the HSP90 pathway to facilitate HIF alpha proteins hydroxylation. Interacts with HSP90AA1, FLCN, FNIP1 and FNIP2. Post-translationally, proteolytically cleaved by caspase-7 (CASP7) in response to apoptosis, leading to its inactivation. Expressed in testis, kidney, bladder and ovary.

The protein localises to the cytoplasm. The enzyme catalyses prostaglandin H2 = prostaglandin E2. Its pathway is lipid metabolism; prostaglandin biosynthesis. Its function is as follows. Cytosolic prostaglandin synthase that catalyzes the oxidoreduction of prostaglandin endoperoxide H2 (PGH2) to prostaglandin E2 (PGE2). Molecular chaperone that localizes to genomic response elements in a hormone-dependent manner and disrupts receptor-mediated transcriptional activation, by promoting disassembly of transcriptional regulatory complexes. Facilitates HIF alpha proteins hydroxylation via interaction with EGLN1/PHD2, leading to recruit EGLN1/PHD2 to the HSP90 pathway. The polypeptide is Prostaglandin E synthase 3 (Ptges3) (Mus musculus (Mouse)).